An 858-amino-acid chain; its full sequence is M-phase phosphoprotein 8 (858 aa).

Residues 18-55 are disordered; it reads VPDSIGRSPESEGVGAGDEEKDAATKGTVAVGDSEEDG. Phosphoserine is present on residues Ser51, Ser85, Ser136, and Ser138. The Chromo domain occupies 59–118; the sequence is FEVERILDMKCEGGKNLYKVRWKGYTSEDDTWEPEVHLEDCKEVLLEFRKKLAENKAKAV. The segment at 80-87 is histone H3K9me3 binding; that stretch reads WKGYTSED. The interval 129–175 is disordered; that stretch reads NDIFEADSDSDQQSDTKEDISPRKKKKKIKCKEETSPEDLRKKRTKM. Thr144 is subject to Phosphothreonine. A phosphoserine; by CDK1 mark is found at Ser149 and Ser164. The segment covering 159–169 has biased composition (basic and acidic residues); that stretch reads CKEETSPEDLR. Ser188 carries the phosphoserine modification. 2 disordered regions span residues 209-234 and 250-300; these read ELKD…NKRA and NRKT…DKTA. Phosphoserine is present on residues Ser267, Ser271, and Ser278. Residues 273-282 are compositionally biased toward acidic residues; sequence ILEDDSEDFI. The segment covering 283–300 has biased composition (basic and acidic residues); that stretch reads SDNREENQNVRSVRDKTA. Ser318 is subject to Phosphoserine. The disordered stretch occupies residues 321 to 431; the sequence is EDAGTRVRRK…YDLDKEEKAR (111 aa). The span at 335-357 shows a compositional bias: basic and acidic residues; the sequence is RKFEEPKEIKKLESTNAFLERRA. Thr385 carries the post-translational modification Phosphothreonine; by CDK1. Residues Ser392 and Ser400 each carry the phosphoserine modification. A compositionally biased stretch (basic and acidic residues) spans 407 to 431; that stretch reads EKEKKNEPKGKYQKRYDLDKEEKAR. Position 453 is a phosphothreonine (Thr453). ANK repeat units lie at residues 598–627, 631–660, 664–693, and 697–726; these read TGMT…KVNG, NGTT…FVNV, NGET…DCNI, and HQNS…TLSR.

In terms of assembly, homodimer. Interacts (via chromo domain) with histone H3K9me3. Has the highest affinity for H3K9me3, and lesser affinity for H3K9me2 and H3K9me1. Component of the HUSH complex; at least composed of TASOR, PPHLN1 and MPHOSPH8. Interacts with DNMT3, EHMT1 and SETDB1. Interacts with MORC2; the interaction associateS MORC2 with the HUSH complex which recruits MORC2 to heterochromatic loci. Interacts with ZNF638; leading to recruitment of the HUSH complex to unintegrated retroviral DNA. Interacts with TASOR. In terms of processing, phosphorylated in M (mitotic) phase. Phosphorylation by CDK1 promotes dissociation from chromatin. As to expression, expressed in the spermatogonia, spermatocytes and granular cells within the cerebellum.

It is found in the nucleus. The protein localises to the chromosome. Functionally, heterochromatin component that specifically recognizes and binds methylated 'Lys-9' of histone H3 (H3K9me) and promotes recruitment of proteins that mediate epigenetic repression. Mediates recruitment of the HUSH complex to H3K9me3 sites: the HUSH complex is recruited to genomic loci rich in H3K9me3 and is required to maintain transcriptional silencing by promoting recruitment of SETDB1, a histone methyltransferase that mediates further deposition of H3K9me3, as well as MORC2. Binds H3K9me and promotes DNA methylation by recruiting DNMT3A to target CpG sites; these can be situated within the coding region of the gene. Mediates down-regulation of CDH1 expression. Also represses L1 retrotransposons in collaboration with MORC2 and, probably, SETDB1, the silencing is dependent of repressive epigenetic modifications, such as H3K9me3 mark. Silencing events often occur within introns of transcriptionally active genes, and lead to the down-regulation of host gene expression. The HUSH complex is also involved in the silencing of unintegrated retroviral DNA by being recruited by ZNF638: some part of the retroviral DNA formed immediately after infection remains unintegrated in the host genome and is transcriptionally repressed. This is M-phase phosphoprotein 8 from Mus musculus (Mouse).